Here is a 256-residue protein sequence, read N- to C-terminus: Isoprenyl transferase (256 aa).

The disordered stretch occupies residues 1–22 (MLEKFSKWKGNRSNHTTPSHSL). Residue aspartate 36 is part of the active site. Aspartate 36 serves as a coordination point for Mg(2+). Residues 37–40 (GNGR), tryptophan 41, arginine 49, histidine 53, and 81–83 (STE) contribute to the substrate site. The active-site Proton acceptor is the asparagine 84. Residues tryptophan 85, arginine 87, arginine 204, and 210–212 (RLS) each bind substrate. Glutamate 223 contributes to the Mg(2+) binding site.

It belongs to the UPP synthase family. Homodimer. Mg(2+) serves as cofactor.

Its function is as follows. Catalyzes the condensation of isopentenyl diphosphate (IPP) with allylic pyrophosphates generating different type of terpenoids. The protein is Isoprenyl transferase of Halalkalibacterium halodurans (strain ATCC BAA-125 / DSM 18197 / FERM 7344 / JCM 9153 / C-125) (Bacillus halodurans).